The chain runs to 100 residues: Apolipoprotein C-II (100 aa).

Residues 1–22 (MSSQFLLAFFLVLLVLGYEVQG) form the signal peptide. The interval 66–74 (SVDEKLRDM) is lipid binding. The segment at 78–100 (SSAAMSTYAGIFTDQLFTLLKGE) is lipoprotein lipase cofactor.

Belongs to the apolipoprotein C2 family. Post-translationally, proapolipoprotein C-II is synthesized as a sialic acid containing glycoprotein which is subsequently desialylated prior to its proteolytic processing. In terms of processing, proapolipoprotein C-II, the major form found in plasma undergoes proteolytic cleavage of its N-terminal hexapeptide to generate the mature form apolipoprotein C-II, which occurs as the minor form in plasma.

The protein resides in the secreted. Its function is as follows. Component of chylomicrons, very low-density lipoproteins (VLDL), low-density lipoproteins (LDL), and high-density lipoproteins (HDL) in plasma. Plays an important role in lipoprotein metabolism as an activator of lipoprotein lipase. The protein is Apolipoprotein C-II (APOC2) of Cricetulus griseus (Chinese hamster).